The following is a 342-amino-acid chain: Spore photoproduct lyase (342 aa).

Residues 77 to 305 (SKPSAEYAIP…EEKRRYKWGR (229 aa)) form the Radical SAM core domain. [4Fe-4S] cluster contacts are provided by cysteine 91, cysteine 95, and cysteine 98. Residues 218-235 (EAAVKVAKAGYPLGFIVA) constitute a DNA-binding region (H-T-H motif).

It belongs to the radical SAM superfamily. SPL family. As to quaternary structure, monomer or homodimer. The cofactor is [4Fe-4S] cluster. S-adenosyl-L-methionine serves as cofactor.

It catalyses the reaction (5R)-5,6-dihydro-5-(thymidin-7-yl)thymidine in DNA = a thymidine dimer in DNA. Involved in repair of UV radiation-induced DNA damage during spore germination. Can repair thymine dimer 5-thyminyl-5,6-dihydrothymine (known as spore photoproduct (SP)) by in situ monomerization of SP to two thymines. The protein is Spore photoproduct lyase (splB) of Bacillus subtilis (strain 168).